The primary structure comprises 142 residues: Small ribosomal subunit protein uS9 (142 aa).

Residues 117 to 142 (KGDPRRTEHKKPGIKHARSKRQKAYR) form a disordered region. Residues 123 to 142 (TEHKKPGIKHARSKRQKAYR) show a composition bias toward basic residues.

Belongs to the universal ribosomal protein uS9 family.

The sequence is that of Small ribosomal subunit protein uS9 from Pyrobaculum aerophilum (strain ATCC 51768 / DSM 7523 / JCM 9630 / CIP 104966 / NBRC 100827 / IM2).